We begin with the raw amino-acid sequence, 283 residues long: Bifunctional protein FolD (283 aa).

NADP(+) is bound by residues 165-167 (GRS) and Ser-190.

The protein belongs to the tetrahydrofolate dehydrogenase/cyclohydrolase family. As to quaternary structure, homodimer.

It carries out the reaction (6R)-5,10-methylene-5,6,7,8-tetrahydrofolate + NADP(+) = (6R)-5,10-methenyltetrahydrofolate + NADPH. It catalyses the reaction (6R)-5,10-methenyltetrahydrofolate + H2O = (6R)-10-formyltetrahydrofolate + H(+). Its pathway is one-carbon metabolism; tetrahydrofolate interconversion. Catalyzes the oxidation of 5,10-methylenetetrahydrofolate to 5,10-methenyltetrahydrofolate and then the hydrolysis of 5,10-methenyltetrahydrofolate to 10-formyltetrahydrofolate. The polypeptide is Bifunctional protein FolD (Paracidovorax citrulli (strain AAC00-1) (Acidovorax citrulli)).